A 103-amino-acid polypeptide reads, in one-letter code: Matrix Gla protein (103 aa).

A signal peptide spans 1–19; sequence MKSLILLAILAALAVVTLC. Residue E21 is modified to 4-carboxyglutamate. A phosphoserine mark is found at S22, S25, and S28. A Gla domain is found at 51–97; sequence RAKVQERIRERSKPVHELNREACDDYRLCERYAMVYGYNAAYNRYFR. E56, E60, E67, and E71 each carry 4-carboxyglutamate. A disulfide bridge connects residues C73 and C79. Residues 97 to 103 constitute a propeptide, removed in mature form; probably by carboxypeptidase N; the sequence is RKRRGTK.

The protein belongs to the osteocalcin/matrix Gla protein family. Requires vitamin K-dependent gamma-carboxylation for its function.

It localises to the secreted. Its function is as follows. Associates with the organic matrix of bone and cartilage. Thought to act as an inhibitor of bone formation. The sequence is that of Matrix Gla protein (MGP) from Homo sapiens (Human).